Consider the following 1060-residue polypeptide: MPKRTDIRKIMVIGSGPIVIGQAAEFDYSGTQACLSLKEEGYQVVLVNSNPATIMTDKDIADKVYIEPITLEFVTRILRKERPDALLPTLGGQTGLNMAMALSKNGILEELNVELLGTKLSAIDKAEDRDLFKQLMEELNQPIPESEIVNSVEEAIQFAEQIGYPLIVRPAFTLGGTGGGMCDNQEQLVDITTKGLKLSPVTQCLIERSIAGFKEIEYEVMRDAADNALVVCNMENFDPVGIHTGDSIVFAPAQTLSDVENQLLRDASLDIIRALKIEGGCNVQLALDPNSFKYYVIEVNPRVSRSSALASKATGYPIAKLAAKIAVGLTLDEVINPITKTTYAMFEPALDYVVAKMPRFPFDKFESGDRKLGTQMKATGEVMAIGRNIEESLLKACRSLEIGVDHIKIADLDNVSDDVLLEKIRKAEDDRLFYLAEALRRHYSIEKLASLTSIDSFFLDKLRVIVELEDLLSKNRLDINILKKVKNKGFSDKAIASLWQINEDQVRNMRKEAGILPVYKMVDTCASEFDSATPYFYSTYAVENESLISDKASILVLGSGPIRIGQGVEFDYATVHSVKAIRESGFEAIIMNSNPETVSTDFSISDKLYFEPLTFEDVMNVIDLEKPEGVILQFGGQTAINLAKDLNKAGVKILGTQLEDLDRAENRKQFEATLQALNIPQPPGFTATTEEEAVNAAQKIGYPVLVRPSYVLGGRAMKIVENEEDLRHYMTTAVKASPDHPVLIDAYLIGKECEVDAISDGQNILIPGIMEHIERSGVHSGDSMAVYPPQTLSETIIETIVDYTKRLAIGLNCIGMMNIQFVIKDQKVYVIEVNPRASRTLPFLSKVTHIPMAQVATKVILGDKLCNFTYGYDLYPASDMVHIKAPVFSFTKLAKVDSLLGPEMKSTGEVMGSDINLQKALYKAFEAAYLHMPDYGNIVFTVDDTDKEEALELAKVYQSIGYRIYATQGTAIYFDANGLETVLVGKLGENDRNHIPDLIKNGKIQAVINTVGQNNIDNHDALIIRRSAIEQGVPLFTSLDTAHAMFKVLESRAFTLKVLD.

Residues 1–401 are carboxyphosphate synthetic domain; it reads MPKRTDIRKI…SLLKACRSLE (401 aa). Positions 129, 169, 175, 176, 208, 210, 215, 241, 242, 243, 284, and 298 each coordinate ATP. Residues 133–327 form the ATP-grasp 1 domain; sequence KQLMEELNQP…IAKLAAKIAV (195 aa). Gln284, Glu298, and Asn300 together coordinate Mg(2+). The Mn(2+) site is built by Gln284, Glu298, and Asn300. The tract at residues 402-546 is oligomerization domain; the sequence is IGVDHIKIAD…YSTYAVENES (145 aa). The interval 547–929 is carbamoyl phosphate synthetic domain; sequence LISDKASILV…ALYKAFEAAY (383 aa). In terms of domain architecture, ATP-grasp 2 spans 671-861; the sequence is EATLQALNIP…MAQVATKVIL (191 aa). ATP contacts are provided by Arg707, Ala746, Leu748, Glu752, Gly777, Val778, His779, Ser780, Gln820, and Glu832. Gln820, Glu832, and Asn834 together coordinate Mg(2+). Residues Gln820, Glu832, and Asn834 each coordinate Mn(2+). The MGS-like domain maps to 930–1060; it reads LHMPDYGNIV…SRAFTLKVLD (131 aa). Residues 930–1060 are allosteric domain; that stretch reads LHMPDYGNIV…SRAFTLKVLD (131 aa).

This sequence belongs to the CarB family. In terms of assembly, composed of two chains; the small (or glutamine) chain promotes the hydrolysis of glutamine to ammonia, which is used by the large (or ammonia) chain to synthesize carbamoyl phosphate. Tetramer of heterodimers (alpha,beta)4. Mg(2+) is required as a cofactor. It depends on Mn(2+) as a cofactor.

The catalysed reaction is hydrogencarbonate + L-glutamine + 2 ATP + H2O = carbamoyl phosphate + L-glutamate + 2 ADP + phosphate + 2 H(+). The enzyme catalyses hydrogencarbonate + NH4(+) + 2 ATP = carbamoyl phosphate + 2 ADP + phosphate + 2 H(+). It participates in amino-acid biosynthesis; L-arginine biosynthesis; carbamoyl phosphate from bicarbonate: step 1/1. Its pathway is pyrimidine metabolism; UMP biosynthesis via de novo pathway; (S)-dihydroorotate from bicarbonate: step 1/3. Its function is as follows. Large subunit of the glutamine-dependent carbamoyl phosphate synthetase (CPSase). CPSase catalyzes the formation of carbamoyl phosphate from the ammonia moiety of glutamine, carbonate, and phosphate donated by ATP, constituting the first step of 2 biosynthetic pathways, one leading to arginine and/or urea and the other to pyrimidine nucleotides. The large subunit (synthetase) binds the substrates ammonia (free or transferred from glutamine from the small subunit), hydrogencarbonate and ATP and carries out an ATP-coupled ligase reaction, activating hydrogencarbonate by forming carboxy phosphate which reacts with ammonia to form carbamoyl phosphate. This chain is Carbamoyl phosphate synthase large chain, found in Streptococcus agalactiae serotype V (strain ATCC BAA-611 / 2603 V/R).